Consider the following 358-residue polypeptide: Putative zinc metalloprotease RC0203 (358 aa).

Histidine 18 serves as a coordination point for Zn(2+). Glutamate 19 is a catalytic residue. Histidine 22 contributes to the Zn(2+) binding site. The next 4 membrane-spanning stretches (helical) occupy residues 52–71, 97–119, 285–307, and 332–351; these read GVRWKICLIPLGGYVKIYGY, FLIVAAGPLINYLLAIIIFAGFY, YLLFIAMLSVNLGLLNLLPIPVL, and ILLQLGAIIIIFLIIIAVSN. The 85-residue stretch at 102-186 folds into the PDZ domain; it reads AGPLINYLLA…STLTIERKSE (85 aa).

The protein belongs to the peptidase M50B family. Zn(2+) serves as cofactor.

The protein resides in the cell inner membrane. The polypeptide is Putative zinc metalloprotease RC0203 (Rickettsia conorii (strain ATCC VR-613 / Malish 7)).